Here is a 187-residue protein sequence, read N- to C-terminus: UPF0215 protein PAE0952 (187 aa).

Belongs to the UPF0215 family.

This Pyrobaculum aerophilum (strain ATCC 51768 / DSM 7523 / JCM 9630 / CIP 104966 / NBRC 100827 / IM2) protein is UPF0215 protein PAE0952.